Reading from the N-terminus, the 446-residue chain is Immunoglobulin heavy constant gamma 3 (446 aa).

The segment at 1–98 is CH1; sequence ASTKGPSVFP…PSNTKVDKRV (98 aa). Residues 1–397 are Extracellular-facing; that stretch reads ASTKGPSVFP…DGELDGLWTT (397 aa). The region spanning 6–99 is the Ig-like 1 domain; that stretch reads PSVFPLAPCS…SNTKVDKRVE (94 aa). A disulfide bridge links C27 with C83. The interval 99-160 is hinge; that stretch reads ELKTPLGDTT…DTPPPCPRCP (62 aa). Repeats lie at residues 116–130, 131–145, and 146–160; these read EPKSCDTPPPCPRCP. 3 O-linked (GalNAc...) threonine glycosylation sites follow: T122, T137, and T152. The CH2 stretch occupies residues 161–270; it reads APELLGGPSV…PIEKTISKTK (110 aa). Ig-like domains are found at residues 168 to 267 and 276 to 372; these read PSVF…KTIS and PQVY…KSLS. Intrachain disulfides connect C191-C251 and C297-C355. N-linked (GlcNAc...) asparagine glycans are attached at residues N227 and N322. The tract at residues 271–376 is CH3; the sequence is GQPREPQVYT…TQKSLSLSPE (106 aa). A helical membrane pass occupies residues 398-418; that stretch reads ITIFITLFLLSVCYSATVTFF. The Cytoplasmic portion of the chain corresponds to 419–446; sequence KVKWIFSSVVDLKQTIIPDYRNMIGQGA.

In terms of assembly, immunoglobulins are composed of two identical heavy chains and two identical light chains; disulfide-linked. Post-translationally, N-linked glycans at Asn-322 are noncore fucosylated and the vast majority are diantennary species with a bisecting GlcNAc. Among them the most dominant glycans are HexNAc5Hex4, HexNAc5Hex5, and HexNAc5Hex5Sia1. N-linked glycans at Asn-227 are diantennary core fucosylated structures without bisecting GlcNAc (HexNAc4Hex4Fuc1, HexNAc4Hex5Fuc1, and HexNAc4Hex5Fuc1Sia1). Glycosylation on Asn-227 is required for interaction with Fc receptors and ability to activate the complement pathway. In terms of processing, (Microbial infection) Deglycosylation on Asn-227 by S.pyogenes EndoS or Endos2 endoglucosidases prevents interaction between immunoglobulin-gamma (IgG) and Fc receptors, impairing ability to activate the complement pathway. Post-translationally, O-linked glycans are non-, mono- and disialylated core 1-type O-glycans.

The protein localises to the secreted. The protein resides in the cell membrane. Constant region of immunoglobulin heavy chains. Immunoglobulins, also known as antibodies, are membrane-bound or secreted glycoproteins produced by B lymphocytes. In the recognition phase of humoral immunity, the membrane-bound immunoglobulins serve as receptors which, upon binding of a specific antigen, trigger the clonal expansion and differentiation of B lymphocytes into immunoglobulins-secreting plasma cells. Secreted immunoglobulins mediate the effector phase of humoral immunity, which results in the elimination of bound antigens. The antigen binding site is formed by the variable domain of one heavy chain, together with that of its associated light chain. Thus, each immunoglobulin has two antigen binding sites with remarkable affinity for a particular antigen. The variable domains are assembled by a process called V-(D)-J rearrangement and can then be subjected to somatic hypermutations which, after exposure to antigen and selection, allow affinity maturation for a particular antigen. The chain is Immunoglobulin heavy constant gamma 3 from Homo sapiens (Human).